A 421-amino-acid polypeptide reads, in one-letter code: MVRYISDYDLQDVDTEVFKCITDESNRQNSQLQLIASENFVSKAVLQAQGSIFTNKYAEGYPGKRYYCGCHFADIIENIAIERLCKLFGCKFANVQPHSGSQANQGVFAALLKPGDTVIGMSLDCGGHLTHGSAPSISGKWFNAVQYQVDRDTGMIDMDAIEKLALSHNPSLIIAGSSSYPRTIDFKRFREIADKVGAYLLADIAHYAGLVAAGEFPSPIEYAHVITSTTHKTLRGPRGAVIMTNHEDIYKKIQSSIFPGMQGGPLMHVIAARAVAFGEALKPEFKDYAKQIIKNSKTLVKVFQERGLNVVTGGTDSHMVVVDLRPKSVTGKDAVLALERLGIICNKNAIPFDPEKPFVTSGLRFGSAAETSRGLQEPEFEKIGHMVCDVIDSLKTTDDVRLSIEQDVIRRVKELTDTFKV.

Residues Leu-123 and Gly-127–Leu-129 contribute to the (6S)-5,6,7,8-tetrahydrofolate site. Lys-232 is modified (N6-(pyridoxal phosphate)lysine).

Belongs to the SHMT family. Homodimer. Pyridoxal 5'-phosphate is required as a cofactor.

The protein localises to the cytoplasm. It catalyses the reaction (6R)-5,10-methylene-5,6,7,8-tetrahydrofolate + glycine + H2O = (6S)-5,6,7,8-tetrahydrofolate + L-serine. It functions in the pathway one-carbon metabolism; tetrahydrofolate interconversion. The protein operates within amino-acid biosynthesis; glycine biosynthesis; glycine from L-serine: step 1/1. Its function is as follows. Catalyzes the reversible interconversion of serine and glycine with tetrahydrofolate (THF) serving as the one-carbon carrier. This reaction serves as the major source of one-carbon groups required for the biosynthesis of purines, thymidylate, methionine, and other important biomolecules. Also exhibits THF-independent aldolase activity toward beta-hydroxyamino acids, producing glycine and aldehydes, via a retro-aldol mechanism. This chain is Serine hydroxymethyltransferase, found in Ehrlichia ruminantium (strain Gardel).